Consider the following 95-residue polypeptide: Protein TusB (95 aa).

It belongs to the DsrH/TusB family. Heterohexamer, formed by a dimer of trimers. The hexameric TusBCD complex contains 2 copies each of TusB, TusC and TusD. The TusBCD complex interacts with TusE.

The protein localises to the cytoplasm. Its function is as follows. Part of a sulfur-relay system required for 2-thiolation of 5-methylaminomethyl-2-thiouridine (mnm(5)s(2)U) at tRNA wobble positions. This chain is Protein TusB, found in Sodalis glossinidius (strain morsitans).